The following is a 472-amino-acid chain: 3-isopropylmalate dehydratase large subunit (472 aa).

The [4Fe-4S] cluster site is built by Cys347, Cys407, and Cys410.

It belongs to the aconitase/IPM isomerase family. LeuC type 1 subfamily. As to quaternary structure, heterodimer of LeuC and LeuD. [4Fe-4S] cluster serves as cofactor.

The catalysed reaction is (2R,3S)-3-isopropylmalate = (2S)-2-isopropylmalate. The protein operates within amino-acid biosynthesis; L-leucine biosynthesis; L-leucine from 3-methyl-2-oxobutanoate: step 2/4. Catalyzes the isomerization between 2-isopropylmalate and 3-isopropylmalate, via the formation of 2-isopropylmaleate. This is 3-isopropylmalate dehydratase large subunit from Bacillus subtilis (strain 168).